Consider the following 169-residue polypeptide: Endoribonuclease YbeY (169 aa).

Zn(2+) contacts are provided by His-130, His-134, and His-140.

This sequence belongs to the endoribonuclease YbeY family. Requires Zn(2+) as cofactor.

It is found in the cytoplasm. Functionally, single strand-specific metallo-endoribonuclease involved in late-stage 70S ribosome quality control and in maturation of the 3' terminus of the 16S rRNA. The sequence is that of Endoribonuclease YbeY from Neisseria meningitidis serogroup B (strain ATCC BAA-335 / MC58).